Here is a 317-residue protein sequence, read N- to C-terminus: Acetyl-coenzyme A carboxylase carboxyl transferase subunit alpha (317 aa).

The 255-residue stretch at 39–293 (RLETKAREAL…GDAIADALSQ (255 aa)) folds into the CoA carboxyltransferase C-terminal domain.

This sequence belongs to the AccA family. In terms of assembly, acetyl-CoA carboxylase is a heterohexamer composed of biotin carboxyl carrier protein (AccB), biotin carboxylase (AccC) and two subunits each of ACCase subunit alpha (AccA) and ACCase subunit beta (AccD).

It localises to the cytoplasm. The catalysed reaction is N(6)-carboxybiotinyl-L-lysyl-[protein] + acetyl-CoA = N(6)-biotinyl-L-lysyl-[protein] + malonyl-CoA. Its pathway is lipid metabolism; malonyl-CoA biosynthesis; malonyl-CoA from acetyl-CoA: step 1/1. Component of the acetyl coenzyme A carboxylase (ACC) complex. First, biotin carboxylase catalyzes the carboxylation of biotin on its carrier protein (BCCP) and then the CO(2) group is transferred by the carboxyltransferase to acetyl-CoA to form malonyl-CoA. This Xanthobacter autotrophicus (strain ATCC BAA-1158 / Py2) protein is Acetyl-coenzyme A carboxylase carboxyl transferase subunit alpha.